We begin with the raw amino-acid sequence, 524 residues long: 2,3-bisphosphoglycerate-independent phosphoglycerate mutase (524 aa).

Mn(2+) contacts are provided by Asp-13 and Ser-63. The Phosphoserine intermediate role is filled by Ser-63. Substrate is bound by residues His-124, 154 to 155, Arg-186, Arg-192, 262 to 265, and Lys-337; these read RD and RADR. Positions 404, 408, 445, 446, and 464 each coordinate Mn(2+).

Belongs to the BPG-independent phosphoglycerate mutase family. In terms of assembly, monomer. Mn(2+) is required as a cofactor.

It carries out the reaction (2R)-2-phosphoglycerate = (2R)-3-phosphoglycerate. It functions in the pathway carbohydrate degradation; glycolysis; pyruvate from D-glyceraldehyde 3-phosphate: step 3/5. Catalyzes the interconversion of 2-phosphoglycerate and 3-phosphoglycerate. This is 2,3-bisphosphoglycerate-independent phosphoglycerate mutase from Thermomicrobium roseum (strain ATCC 27502 / DSM 5159 / P-2).